Here is a 225-residue protein sequence, read N- to C-terminus: Cbp/p300-interacting transactivator 2 (225 aa).

This sequence belongs to the CITED family.

It is found in the nucleus. In terms of biological role, transcriptional coactivator or corepressor of the p300/CBP-mediated transcription complex. May be involved in sex determination, early gonad development, left-right patterning during embryogenesis and differentiation of the adrenal cortex. This chain is Cbp/p300-interacting transactivator 2 (cited2), found in Xenopus laevis (African clawed frog).